A 315-amino-acid polypeptide reads, in one-letter code: tRNA dimethylallyltransferase (315 aa).

10–17 (GPTGVGKT) provides a ligand contact to ATP. A substrate-binding site is contributed by 12–17 (TGVGKT). The interaction with substrate tRNA stretch occupies residues 35-38 (DSMQ).

This sequence belongs to the IPP transferase family. Monomer. Mg(2+) is required as a cofactor.

It carries out the reaction adenosine(37) in tRNA + dimethylallyl diphosphate = N(6)-dimethylallyladenosine(37) in tRNA + diphosphate. Catalyzes the transfer of a dimethylallyl group onto the adenine at position 37 in tRNAs that read codons beginning with uridine, leading to the formation of N6-(dimethylallyl)adenosine (i(6)A). The protein is tRNA dimethylallyltransferase of Thermodesulfovibrio yellowstonii (strain ATCC 51303 / DSM 11347 / YP87).